The primary structure comprises 264 residues: Ribosomal protein L11 methyltransferase (264 aa).

S-adenosyl-L-methionine contacts are provided by Thr116, Gly137, Asp159, and Asn200.

This sequence belongs to the methyltransferase superfamily. PrmA family.

It is found in the cytoplasm. The enzyme catalyses L-lysyl-[protein] + 3 S-adenosyl-L-methionine = N(6),N(6),N(6)-trimethyl-L-lysyl-[protein] + 3 S-adenosyl-L-homocysteine + 3 H(+). Functionally, methylates ribosomal protein L11. The protein is Ribosomal protein L11 methyltransferase of Thermotoga maritima (strain ATCC 43589 / DSM 3109 / JCM 10099 / NBRC 100826 / MSB8).